Reading from the N-terminus, the 714-residue chain is Probable metal-nicotianamine transporter YSL5 (714 aa).

A disordered region spans residues His-17–Asp-44. The span at Glu-27 to Phe-36 shows a compositional bias: basic and acidic residues. A run of 13 helical transmembrane segments spans residues Ala-67–Leu-87, Gly-90–Trp-110, Cys-135–Met-155, Leu-175–Pro-195, Val-236–Gly-256, Ile-295–Ile-315, Val-340–Ser-360, Ile-413–Leu-433, Ile-445–Leu-465, Leu-477–Leu-497, Phe-531–Leu-551, Leu-593–Leu-613, and Phe-631–Trp-651.

This sequence belongs to the YSL (TC 2.A.67.2) family.

The protein resides in the membrane. In terms of biological role, may be involved in the transport of nicotianamine-chelated metals. The protein is Probable metal-nicotianamine transporter YSL5 (YSL5) of Arabidopsis thaliana (Mouse-ear cress).